The following is a 162-amino-acid chain: Small ribosomal subunit protein uS5 (162 aa).

Positions 11-74 constitute an S5 DRBM domain; that stretch reads LTDRVVHISR…EQAKKNLIKV (64 aa).

It belongs to the universal ribosomal protein uS5 family. In terms of assembly, part of the 30S ribosomal subunit. Contacts proteins S4 and S8.

Its function is as follows. With S4 and S12 plays an important role in translational accuracy. Located at the back of the 30S subunit body where it stabilizes the conformation of the head with respect to the body. The polypeptide is Small ribosomal subunit protein uS5 (Pelobacter propionicus (strain DSM 2379 / NBRC 103807 / OttBd1)).